Reading from the N-terminus, the 293-residue chain is Bifunctional protein FolD (293 aa).

Residues 162-164 and Ile227 contribute to the NADP(+) site; that span reads GQS.

It belongs to the tetrahydrofolate dehydrogenase/cyclohydrolase family. In terms of assembly, homodimer.

The catalysed reaction is (6R)-5,10-methylene-5,6,7,8-tetrahydrofolate + NADP(+) = (6R)-5,10-methenyltetrahydrofolate + NADPH. The enzyme catalyses (6R)-5,10-methenyltetrahydrofolate + H2O = (6R)-10-formyltetrahydrofolate + H(+). It participates in one-carbon metabolism; tetrahydrofolate interconversion. Its function is as follows. Catalyzes the oxidation of 5,10-methylenetetrahydrofolate to 5,10-methenyltetrahydrofolate and then the hydrolysis of 5,10-methenyltetrahydrofolate to 10-formyltetrahydrofolate. The protein is Bifunctional protein FolD of Metamycoplasma arthritidis (strain 158L3-1) (Mycoplasma arthritidis).